The chain runs to 282 residues: Flagellin (282 aa).

The protein belongs to the bacterial flagellin family.

The protein resides in the secreted. It localises to the bacterial flagellum. Functionally, flagellin is the subunit protein which polymerizes to form the filaments of bacterial flagella. The flagellum is required to cause a persistent disease in a murine model of infection. This chain is Flagellin (fliC), found in Brucella melitensis biotype 1 (strain ATCC 23456 / CCUG 17765 / NCTC 10094 / 16M).